The chain runs to 317 residues: Melanocyte-stimulating hormone receptor (317 aa).

Over 1 to 37 the chain is Extracellular; the sequence is MPVQGSQRRLLGSLNSTPTATPHLGLAANQTGARCLE. Asn29 carries N-linked (GlcNAc...) asparagine glycosylation. Residues 38–63 form a helical membrane-spanning segment; the sequence is VSIPDGLFLSLGLVSLVENVLVVTAI. Topologically, residues 64 to 72 are cytoplasmic; that stretch reads AKNRNLHSP. A helical transmembrane segment spans residues 73–93; the sequence is MYCFICCLALSDLLVSGSNML. The Extracellular segment spans residues 94–118; that stretch reads ETAVILLLEAGALAARAAVVQQLDN. A helical membrane pass occupies residues 119 to 140; sequence VIDVITCSSMLASLCFLGAIAV. Residues 141–163 are Cytoplasmic-facing; it reads DRYISIFYALRYHSIVTLPRARR. A helical membrane pass occupies residues 164–183; the sequence is AVAAIWVASVLFSMLFIAYY. Topologically, residues 184–191 are extracellular; that stretch reads DHAAVLLC. Residues 192-211 traverse the membrane as a helical segment; sequence LVVFFLAMLVLMAVLYIHML. Residues 212-240 lie on the Cytoplasmic side of the membrane; the sequence is ARARQHAQGIARLHKRQCPAHQGFGLKGA. A helical membrane pass occupies residues 241 to 266; the sequence is ATLTILLGIFFLCWGPFFLHLTLIVL. At 267-279 the chain is on the extracellular side; sequence CPQHPTCSCIFKN. Residues 280–300 traverse the membrane as a helical segment; sequence FNLFLALIICNAIIDPLIYAF. Residues 301 to 317 are Cytoplasmic-facing; it reads RSQELRRTLKEVLLCSW. The S-palmitoyl cysteine moiety is linked to residue Cys315.

This sequence belongs to the G-protein coupled receptor 1 family. As to quaternary structure, interacts with MGRN1, but does not undergo MGRN1-mediated ubiquitination; this interaction competes with GNAS-binding and thus inhibits agonist-induced cAMP production. Interacts with OPN3; the interaction results in a decrease in MC1R-mediated cAMP signaling and ultimately a decrease in melanin production in melanocytes.

Its subcellular location is the cell membrane. Its function is as follows. Receptor for MSH (alpha, beta and gamma) and ACTH. The activity of this receptor is mediated by G proteins which activate adenylate cyclase. Mediates melanogenesis, the production of eumelanin (black/brown) and phaeomelanin (red/yellow), via regulation of cAMP signaling in melanocytes. In Cercopithecus mitis (Blue monkey), this protein is Melanocyte-stimulating hormone receptor (MC1R).